The sequence spans 344 residues: Unsaturated rhamnogalacturonyl hydrolase YesR (344 aa).

Substrate-binding positions include 30–31 (DW), Asn-74, and 118–128 (QHTVNAAEYVF). Asp-135 (proton donor) is an active-site residue. Residues 198–202 (RANGW) and 308–309 (NA) contribute to the substrate site.

The protein belongs to the glycosyl hydrolase 105 family. Monomer.

Its subcellular location is the cytoplasm. It catalyses the reaction 2-O-(4-deoxy-beta-L-threo-hex-4-enopyranuronosyl)-alpha-L-rhamnose + H2O = 5-dehydro-4-deoxy-D-glucuronate + L-rhamnopyranose. Functionally, catalyzes the hydrolysis of unsaturated rhamnogalacturonan disaccharide to yield unsaturated D-galacturonic acid and L-rhamnose. It cannot act on unsaturated glucuronyl hydrolase (UGL) substrates containing unsaturated D-glucuronic acid at the non-reducing terminus, although the active pockets of YesR and UGL are very similar. In Bacillus subtilis (strain 168), this protein is Unsaturated rhamnogalacturonyl hydrolase YesR (yesR).